Reading from the N-terminus, the 855-residue chain is Photoactivated adenylate cyclase subunit beta-like protein 1224-5/9F (855 aa).

The BLUF 1 domain occupies 56-149 (LRRLMYLSKG…GRMSGVWHMK (94 aa)). The interval 420–444 (RPPIFDDTPKCNPRPRTPGCEGRQR) is disordered. One can recognise a BLUF 2 domain in the interval 471–563 (VPTLTYISHA…RVYPSEWTLT (93 aa)). Positions 813 to 827 (RSGEKPLTEPEEAKL) are enriched in basic and acidic residues. The interval 813–855 (RSGEKPLTEPEEAKLDFSPGRVRHGDSGRRSNSAQGKLSIQVR) is disordered. Residues 842–855 (RSNSAQGKLSIQVR) are compositionally biased toward polar residues.

Heterotetramer of two alpha and two beta subunits.

The protein localises to the cell projection. It localises to the cilium. The protein resides in the flagellum. The polypeptide is Photoactivated adenylate cyclase subunit beta-like protein 1224-5/9F (Euglena gracilis).